A 119-amino-acid polypeptide reads, in one-letter code: uncharacterized protein (119 aa).

This is an uncharacterized protein from Ureaplasma parvum serovar 3 (strain ATCC 700970).